The primary structure comprises 512 residues: Cytochrome P450 monooxygenase adrA (512 aa).

Residues 12 to 32 (FEPVSLVGLVLLSGLFLLLTA) traverse the membrane as a helical segment. 3 N-linked (GlcNAc...) asparagine glycosylation sites follow: N86, N149, and N210. Position 453 (C453) interacts with heme.

This sequence belongs to the cytochrome P450 family. It depends on heme as a cofactor.

The protein resides in the membrane. Its pathway is secondary metabolite biosynthesis; terpenoid biosynthesis. Cytochrome P450 monooxygenase; part of the gene cluster that mediates the biosynthesis of andrastins, meroterpenoid compounds that exhibit inhibitory activity against ras farnesyltransferase, suggesting that they could be promising leads for antitumor agents. The first step of the pathway is the synthesis of 3,5-dimethylorsellinic acid (DMOA) by the polyketide synthase adrD via condensation of one acetyl-CoA starter unit with 3 malonyl-CoA units and 2 methylations. DMAO is then converted to farnesyl-DMAO by the prenyltransferase adrG. The methyltransferase adrK catalyzes the methylation of the carboxyl group of farnesyl-DMAO to farnesyl-DMAO methyl ester which is further converted to epoxyfarnesyl-DMAO methyl ester by the FAD-dependent monooxygenase adrH. The terpene cyclase adrI then catalyzes the carbon skeletal rearrangement to generate the andrastin E, the first compound in the pathway having the andrastin scaffold, with the tetracyclic ring system. The post-cyclization tailoring enzymes adrF, adrE, adrJ, and adrA, are involved in the conversion of andrastin E into andrastin A. The short chain dehydrogenase adrF is responsible for the oxidation of the C-3 a hydroxyl group of andrastin E to yield the corresponding ketone, andrastin D. The ketoreductase adrE stereoselectively reduces the carbonyl moiety to reverse the stereochemistry of the C-3 position to yield andrastin F. The acetyltransferase adrJ is the acetyltransferase that attaches the acetyl group to the C-3 hydroxyl group of andrastin F to yield andrastin C. Finally, the cytochrome P450 monooxygenase adrA catalyzes two sequential oxidation reactions of the C-23 methyl group, to generate the corresponding alcohol andrastin B, and aldehyde andrastin A. The protein is Cytochrome P450 monooxygenase adrA of Penicillium rubens (strain ATCC 28089 / DSM 1075 / NRRL 1951 / Wisconsin 54-1255) (Penicillium chrysogenum).